The primary structure comprises 546 residues: Peptidoglycan transport ATP-binding protein YejF (546 aa).

2 ABC transporter domains span residues Val12–Leu261 and Ile291–Leu530. ATP-binding positions include Gly46–Ser53 and Gly323–Thr330.

The protein belongs to the ABC transporter superfamily. As to quaternary structure, the complex is composed of one ATP-binding protein (YejF), two transmembrane proteins (YejB and YejE) and a solute-binding protein (YepA or YejA).

It is found in the cell inner membrane. Its function is as follows. Part of the ABC transporter complex YejBEF-YepA involved in the uptake of muropeptides, the breakdown products of cell wall peptidoglycan. The import of muropeptides into the cell enables peptidoglycan recycling, which is vital for cell wall integrity in this bacterium. Is also probably part of the ABC transporter complex YejABEF, which is likely involved in broad-spectrum peptide import. Responsible for energy coupling to the transport system. The polypeptide is Peptidoglycan transport ATP-binding protein YejF (Agrobacterium fabrum (strain C58 / ATCC 33970) (Agrobacterium tumefaciens (strain C58))).